Here is a 232-residue protein sequence, read N- to C-terminus: Y-linked testis-specific protein 1 (232 aa).

It belongs to the SPIN/STSY family. In terms of tissue distribution, expressed in testis (at protein level).

The polypeptide is Y-linked testis-specific protein 1 (Ssty1) (Mus musculus (Mouse)).